A 406-amino-acid chain; its full sequence is DNA-binding transcriptional repressor Mlc (406 aa).

The H-T-H motif DNA-binding region spans 33 to 42; that stretch reads RIDLSRLAQL. His-247, Cys-257, Cys-259, and Cys-264 together coordinate Zn(2+).

The protein belongs to the ROK (NagC/XylR) family. In terms of assembly, homodimer. Homotetramer. There is probably an equilibrium between the dimeric and the tetrameric form. Interacts with dephosphorylated PtsG. Mlc and PtsG EIIB domain form a complex with the 1:1 stoichiometry. Interacts with MtfA.

The protein localises to the cytoplasm. Its activity is regulated as follows. Activity is modulated by glucose. In the presence of glucose, is inhibited by interaction with the dephosphorylated form of PtsG, which sequesters Mlc in the inner membrane and prevents Mlc binding to its target promoters. The restriction of conformational freedom resulting from the anchoring of four ends of Mlc to the membrane could be the primary cause of its loss of DNA-binding activity in vivo. Activity is also inhibited by interaction with the Mlc titration factor A (mtfA). The inactivation mechanisms of Mlc by dephosphorylated PtsG and MtfA differ significantly. In terms of biological role, global regulator of carbohydrate metabolism. Represses the expression of several genes involved in sugar transport and utilization, in particular phosphoenolpyruvate-carbohydrate phosphotransferase system (PTS) genes. Represses expression of ptsG (EIICB(Glc)), which encodes the PTS system glucose-specific EIICB component. Also represses the expression of the manXYZ operon, encoding the mannose-specific PTS system, expression of malT, encoding the transcriptional activator of the maltose regulon, and expression of the pts operon, composed of the genes ptsH, ptsI and crr. Represses its own expression. Acts by binding to the regulatory region of the target genes. The polypeptide is DNA-binding transcriptional repressor Mlc (Escherichia coli (strain K12)).